We begin with the raw amino-acid sequence, 238 residues long: Cadherin-2 (238 aa).

Cadherin domains lie at 1-46, 47-161, and 162-238; these read TKPL…RPEF, LHQV…PPEF, and TAMT…RMFV. The Extracellular portion of the chain corresponds to 1 to 238; that stretch reads TKPLDRELIA…IDFETNRMFV (238 aa). Ca(2+) contacts are provided by Asp-5, Glu-7, Asp-38, Met-39, Asn-40, Asp-41, and Asn-42. Asn-52 carries an N-linked (GlcNAc...) asparagine glycan. The Ca(2+) site is built by Asp-72, Asp-74, and Asn-80. An N-linked (GlcNAc...) asparagine glycan is attached at Asn-104. Asp-132 provides a ligand contact to Ca(2+). N-linked (GlcNAc...) asparagine glycosylation is present at Asn-181.

Homodimer (via extracellular region). Can also form heterodimers with other cadherins (via extracellular region). Dimerization occurs in trans, i.e. with a cadherin chain from another cell. Interacts with CDCP1. Interacts with PCDH8; this complex may also include TAOK2. The interaction with PCDH8 may lead to internalization through TAOK2/p38 MAPK pathway. Identified in a complex containing FGFR4, NCAM1, CDH2, PLCG1, FRS2, SRC, SHC1, GAP43 and CTTN. May interact with OBSCN (via protein kinase domain 2). Cleaved by MMP24. Ectodomain cleavage leads to the generation of a soluble 90 kDa N-terminal soluble fragment and a 45 kDa membrane-bound C-terminal fragment 1 (CTF1), which is further cleaved by gamma-secretase into a 35 kDa. Cleavage in neural stem cells by MMP24 affects CDH2-mediated anchorage of neural stem cells to ependymocytes in the adult subependymal zone, leading to modulate neural stem cell quiescence. In terms of processing, may be phosphorylated by OBSCN.

Its subcellular location is the cell membrane. It is found in the sarcolemma. It localises to the cell junction. The protein resides in the cell surface. The protein localises to the desmosome. Its subcellular location is the adherens junction. Calcium-dependent cell adhesion protein; preferentially mediates homotypic cell-cell adhesion by dimerization with a CDH2 chain from another cell. Cadherins may thus contribute to the sorting of heterogeneous cell types. Acts as a regulator of neural stem cells quiescence by mediating anchorage of neural stem cells to ependymocytes in the adult subependymal zone: upon cleavage by MMP24, CDH2-mediated anchorage is affected, leading to modulate neural stem cell quiescence. Plays a role in cell-to-cell junction formation between pancreatic beta cells and neural crest stem (NCS) cells, promoting the formation of processes by NCS cells. Required for proper neurite branching. Required for pre- and postsynaptic organization. CDH2 may be involved in neuronal recognition mechanism. In hippocampal neurons, may regulate dendritic spine density. This chain is Cadherin-2 (CDH2), found in Cricetulus griseus (Chinese hamster).